The sequence spans 242 residues: Type III pantothenate kinase (242 aa).

7–14 (DLGNSRFK) lines the ATP pocket. Substrate contacts are provided by residues tyrosine 91 and 98 to 101 (GVDR). The active-site Proton acceptor is the aspartate 100. Threonine 121 lines the ATP pocket. Threonine 171 serves as a coordination point for substrate.

This sequence belongs to the type III pantothenate kinase family. As to quaternary structure, homodimer. NH4(+) is required as a cofactor. The cofactor is K(+).

It is found in the cytoplasm. The enzyme catalyses (R)-pantothenate + ATP = (R)-4'-phosphopantothenate + ADP + H(+). It participates in cofactor biosynthesis; coenzyme A biosynthesis; CoA from (R)-pantothenate: step 1/5. Functionally, catalyzes the phosphorylation of pantothenate (Pan), the first step in CoA biosynthesis. The sequence is that of Type III pantothenate kinase from Xanthomonas euvesicatoria pv. vesicatoria (strain 85-10) (Xanthomonas campestris pv. vesicatoria).